The following is a 228-amino-acid chain: Endonuclease V (228 aa).

2 residues coordinate Mg(2+): Asp43 and Asp109.

This sequence belongs to the endonuclease V family. Requires Mg(2+) as cofactor.

The protein localises to the cytoplasm. It carries out the reaction Endonucleolytic cleavage at apurinic or apyrimidinic sites to products with a 5'-phosphate.. In terms of biological role, DNA repair enzyme involved in the repair of deaminated bases. Selectively cleaves double-stranded DNA at the second phosphodiester bond 3' to a deoxyinosine leaving behind the intact lesion on the nicked DNA. This is Endonuclease V from Dictyoglomus thermophilum (strain ATCC 35947 / DSM 3960 / H-6-12).